The primary structure comprises 143 residues: Small ribosomal subunit protein uS11c (143 aa).

This sequence belongs to the universal ribosomal protein uS11 family. As to quaternary structure, part of the 30S ribosomal subunit.

The protein localises to the plastid. It localises to the chloroplast. This Saccharum officinarum (Sugarcane) protein is Small ribosomal subunit protein uS11c.